Here is a 1213-residue protein sequence, read N- to C-terminus: uncharacterized protein (1213 aa).

A PH domain is found at 289 to 390 (ATKRQGWLLR…WGSVINNARE (102 aa)). In terms of domain architecture, VASt spans 776–945 (LDDIVFDRVY…EVNFLEKATR (170 aa)). 2 helical membrane passes run 996–1016 (LFLQ…FHIF) and 1025–1045 (FLVI…FCFG).

Its subcellular location is the cytoplasm. The protein resides in the nucleus membrane. It is found in the cytoskeleton. It localises to the microtubule organizing center. The protein localises to the spindle pole body. This is an uncharacterized protein from Schizosaccharomyces pombe (strain 972 / ATCC 24843) (Fission yeast).